Consider the following 451-residue polypeptide: Tubulin alpha chain (451 aa).

Residues 1-4 (MREC) carry the MREC motif motif. Glutamine 11 lines the GTP pocket. Lysine 40 carries the N6-acetyllysine modification. Residues glutamate 71, serine 140, glycine 144, threonine 145, threonine 179, asparagine 206, and asparagine 228 each contribute to the GTP site. Mg(2+) is bound at residue glutamate 71. Residue glutamate 254 is part of the active site. The segment at 432–451 (YEEVGVDSVEGEGEEEGEEY) is disordered. Glutamate 445 carries the 5-glutamyl polyglutamate modification.

It belongs to the tubulin family. In terms of assembly, dimer of alpha and beta chains. A typical microtubule is a hollow water-filled tube with an outer diameter of 25 nm and an inner diameter of 15 nM. Alpha-beta heterodimers associate head-to-tail to form protofilaments running lengthwise along the microtubule wall with the beta-tubulin subunit facing the microtubule plus end conferring a structural polarity. Microtubules usually have 13 protofilaments but different protofilament numbers can be found in some organisms and specialized cells. It depends on Mg(2+) as a cofactor. In terms of processing, some glutamate residues at the C-terminus are polyglycylated, resulting in polyglycine chains on the gamma-carboxyl group. Glycylation is mainly limited to tubulin incorporated into axonemes (cilia and flagella) whereas glutamylation is prevalent in neuronal cells, centrioles, axonemes, and the mitotic spindle. Both modifications can coexist on the same protein on adjacent residues, and lowering polyglycylation levels increases polyglutamylation, and reciprocally. The precise function of polyglycylation is still unclear. Some glutamate residues at the C-terminus are polyglutamylated, resulting in polyglutamate chains on the gamma-carboxyl group. Polyglutamylation plays a key role in microtubule severing by spastin (SPAST). SPAST preferentially recognizes and acts on microtubules decorated with short polyglutamate tails: severing activity by SPAST increases as the number of glutamates per tubulin rises from one to eight, but decreases beyond this glutamylation threshold. Post-translationally, acetylation of alpha chains at Lys-40 is located inside the microtubule lumen. This modification has been correlated with increased microtubule stability, intracellular transport and ciliary assembly. In terms of processing, undergoes a tyrosination/detyrosination cycle, the cyclic removal and re-addition of a C-terminal tyrosine residue by the enzymes tubulin tyrosine carboxypeptidase (MATCAP, VASH1 or VASH2) and tubulin tyrosine ligase (TTL), respectively. Tyrosination promotes microtubule interaction with CAP-Gly microtubule plus-end tracking proteins. Tyrosinated tubulins regulate the initiation of dynein-driven motility. Post-translationally, detyrosination is involved in metaphase plate congression by guiding chromosomes during mitosis. Detyrosination increases microtubules-dependent mechanotransduction in dystrophic cardiac and skeletal muscle. In cardiomyocytes, detyrosinated microtubules are required to resist to contractile compression during contraction.

The protein resides in the cytoplasm. The protein localises to the cytoskeleton. It catalyses the reaction GTP + H2O = GDP + phosphate + H(+). Its function is as follows. Tubulin is the major constituent of microtubules, a cylinder consisting of laterally associated linear protofilaments composed of alpha- and beta-tubulin heterodimers. Microtubules grow by the addition of GTP-tubulin dimers to the microtubule end, where a stabilizing cap forms. Below the cap, tubulin dimers are in GDP-bound state, owing to GTPase activity of alpha-tubulin. The protein is Tubulin alpha chain of Torpedo marmorata (Marbled electric ray).